A 356-amino-acid polypeptide reads, in one-letter code: S-adenosylmethionine:tRNA ribosyltransferase-isomerase (356 aa).

The protein belongs to the QueA family. In terms of assembly, monomer.

The protein resides in the cytoplasm. It carries out the reaction 7-aminomethyl-7-carbaguanosine(34) in tRNA + S-adenosyl-L-methionine = epoxyqueuosine(34) in tRNA + adenine + L-methionine + 2 H(+). The protein operates within tRNA modification; tRNA-queuosine biosynthesis. Functionally, transfers and isomerizes the ribose moiety from AdoMet to the 7-aminomethyl group of 7-deazaguanine (preQ1-tRNA) to give epoxyqueuosine (oQ-tRNA). This is S-adenosylmethionine:tRNA ribosyltransferase-isomerase from Salmonella arizonae (strain ATCC BAA-731 / CDC346-86 / RSK2980).